The following is a 383-amino-acid chain: L-lactate dehydrogenase (383 aa).

An FMN hydroxy acid dehydrogenase domain is found at 1–380 (MIISSTFDYR…THESLASTDA (380 aa)). Tyr24 lines the substrate pocket. Positions 106 and 127 each coordinate FMN. Residue Tyr129 coordinates substrate. Thr155 contributes to the FMN binding site. Arg164 provides a ligand contact to substrate. Residue Lys251 coordinates FMN. The active-site Proton acceptor is the His275. Arg278 is a binding site for substrate. 306 to 330 (DSGVRSGLDVVRMIAQGADAVMIGR) provides a ligand contact to FMN.

It belongs to the FMN-dependent alpha-hydroxy acid dehydrogenase family. The cofactor is FMN.

It is found in the cell inner membrane. The catalysed reaction is (S)-lactate + A = pyruvate + AH2. In terms of biological role, catalyzes the conversion of L-lactate to pyruvate. Is coupled to the respiratory chain. This chain is L-lactate dehydrogenase, found in Bartonella quintana (strain Toulouse) (Rochalimaea quintana).